A 547-amino-acid polypeptide reads, in one-letter code: Intercellular adhesion molecule 3 (547 aa).

The N-terminal stretch at methionine 1 to glycine 29 is a signal peptide. At glutamine 30–histidine 485 the chain is on the extracellular side. The 58-residue stretch at glycine 46–serine 103 folds into the Ig-like C2-type 1 domain. 6 N-linked (GlcNAc...) asparagine glycosylation sites follow: asparagine 52, asparagine 84, asparagine 87, asparagine 101, asparagine 110, and asparagine 134. Disulfide bonds link cysteine 53–cysteine 96 and cysteine 57–cysteine 100. An Ig-like C2-type 2 domain is found at glycine 132–glutamine 197. A disulfide bridge links cysteine 139 with cysteine 190. 9 N-linked (GlcNAc...) asparagine glycosylation sites follow: asparagine 206, asparagine 264, asparagine 295, asparagine 308, asparagine 320, asparagine 363, asparagine 389, asparagine 453, and asparagine 457. An Ig-like C2-type 3 domain is found at glutamate 234 to glutamate 301. An intrachain disulfide couples cysteine 241 to cysteine 294. Residues glycine 329–aspartate 382 enclose the Ig-like C2-type 4 domain. Residues cysteine 336 and cysteine 375 are joined by a disulfide bond. One can recognise an Ig-like C2-type 5 domain in the interval lysine 416–glycine 469. A disulfide bond links cysteine 423 and cysteine 462. Residues phenylalanine 486–phenylalanine 510 traverse the membrane as a helical segment. Over arginine 511–glutamate 547 the chain is Cytoplasmic.

The protein belongs to the immunoglobulin superfamily. ICAM family. In terms of assembly, interacts with moesin/MSN. Upon stimulation by a physiologic stimuli becomes rapidly and transiently phosphorylated on serine residues. Post-translationally, N-glycosylated; glycans consist of a mixture of tri- and tetra-antennary complex-type chains and high-mannose chains. Leukocytes.

Its subcellular location is the membrane. Functionally, ICAM proteins are ligands for the leukocyte adhesion protein LFA-1 (integrin alpha-L/beta-2). ICAM3 is also a ligand for integrin alpha-D/beta-2. In association with integrin alpha-L/beta-2, contributes to apoptotic neutrophil phagocytosis by macrophages. In Homo sapiens (Human), this protein is Intercellular adhesion molecule 3 (ICAM3).